Consider the following 554-residue polypeptide: Sesquithujene synthase A (554 aa).

Mg(2+)-binding residues include Asp308 and Asp312. 2 residues coordinate substrate: Asp308 and Asp312. The DDXXD motif motif lies at 308 to 312 (DDMFD). Positions 407–411 (SIGAN) are determine the stereoselectivity of the enzyme. Arg449 and Asn452 together coordinate substrate. Mg(2+) contacts are provided by Asn452, Ser456, and Glu460.

It belongs to the terpene synthase family. Monomer. It depends on Mg(2+) as a cofactor. Requires Mn(2+) as cofactor. Highly expressed in the husk. Detected in leaves.

The protein resides in the cytoplasm. The catalysed reaction is (2E,6E)-farnesyl diphosphate = sesquithujene + diphosphate. It carries out the reaction (2Z,6Z)-farnesyl diphosphate = (1S,5S,6S)-alpha-bergamotene + diphosphate. It catalyses the reaction (2E,6E)-farnesyl diphosphate = (E)-beta-farnesene + diphosphate. The enzyme catalyses (2E,6E)-farnesyl diphosphate = (S)-beta-bisabolene + diphosphate. The catalysed reaction is (2Z,6E)-farnesyl diphosphate = (-)-beta-curcumene + diphosphate. It carries out the reaction (2E,6E)-farnesyl diphosphate = gamma-curcumene + diphosphate. It catalyses the reaction (2E,6E)-farnesyl diphosphate = sesquisabinene B + diphosphate. It functions in the pathway secondary metabolite biosynthesis; terpenoid biosynthesis. In terms of biological role, sesquiterpene synthase involved in the production after herbivore attack of a blend of volatiles that attracts natural enemies of herbivores. Converts farnesyl diphosphate to sesquithujene, (S)-beta-bisabolene, (Z)-alpha-bergamotene, sesquisabinene B and several minor products. Can also act in vitro as a monoterpene synthase, converting geranyl diphosphate to (S)-(-)-limonene, beta-myrcene and 11 other monoterpenes. This chain is Sesquithujene synthase A, found in Zea mays (Maize).